A 323-amino-acid chain; its full sequence is tRNA U34 carboxymethyltransferase (323 aa).

Carboxy-S-adenosyl-L-methionine contacts are provided by residues Lys91, Trp105, Lys110, Gly130, 181 to 182 (IE), Met196, Tyr200, and Arg315.

This sequence belongs to the class I-like SAM-binding methyltransferase superfamily. CmoB family. Homotetramer.

The catalysed reaction is carboxy-S-adenosyl-L-methionine + 5-hydroxyuridine(34) in tRNA = 5-carboxymethoxyuridine(34) in tRNA + S-adenosyl-L-homocysteine + H(+). Functionally, catalyzes carboxymethyl transfer from carboxy-S-adenosyl-L-methionine (Cx-SAM) to 5-hydroxyuridine (ho5U) to form 5-carboxymethoxyuridine (cmo5U) at position 34 in tRNAs. The protein is tRNA U34 carboxymethyltransferase of Yersinia pseudotuberculosis serotype O:1b (strain IP 31758).